We begin with the raw amino-acid sequence, 211 residues long: Allatostatins MIP (211 aa).

An N-terminal signal peptide occupies residues 1–24 (MAHTKTRRTYGFLMVLLILGSACG). Positions 25–63 (NLVASGSAGSPPSNEPGGGGLSEQVVLDQLSESDLYGNN) are excised as a propeptide. At tryptophan 74 the chain carries Tryptophan amide. The propeptide occupies 78–148 (SSSGDVSDPD…DDLAGEPDVE (71 aa)). A compositionally biased stretch (low complexity) spans 115–135 (ASGQSAQQQQQQPLQQQSQSG). The interval 115–142 (ASGQSAQQQQQQPLQQQSQSGEDFDDLA) is disordered. Tryptophan amide occurs at positions 159, 175, 189, and 202. The tract at residues 168–190 (WNKFRGAWGKREPTWNNLKGMWG) is disordered. Positions 206–211 (SQLPSN) are excised as a propeptide.

In larvae, strongly expressed in the midgut region before and in between the copper cells, and in a group of cells in the posterior part of the larval midgut. Expressed in the neurons of many areas including the subesophageal ganglion/tritocerebrum (SOG), olfactory glomeruli, lateral ventral protocerebrum, mushroom body, the optic lobe medulla and in the antennal lobes.

The protein resides in the secreted. Its function is as follows. Ligand for the sex peptide receptor (SPR). Stabilizes sleep and maintains sleep homeostasis to inhibit the activity of wake-promoting circuits, such as those that involve the pigment dispersing factor (pdf) neurons. Regulated by the circadian clock network and pathways associated with a sleep homeostat. May also have a regulatory role in gut motility. This is Allatostatins MIP (Mip) from Drosophila melanogaster (Fruit fly).